The following is a 218-amino-acid chain: Probable nicotinate-nucleotide adenylyltransferase (218 aa).

This sequence belongs to the NadD family.

It carries out the reaction nicotinate beta-D-ribonucleotide + ATP + H(+) = deamido-NAD(+) + diphosphate. It functions in the pathway cofactor biosynthesis; NAD(+) biosynthesis; deamido-NAD(+) from nicotinate D-ribonucleotide: step 1/1. In terms of biological role, catalyzes the reversible adenylation of nicotinate mononucleotide (NaMN) to nicotinic acid adenine dinucleotide (NaAD). The chain is Probable nicotinate-nucleotide adenylyltransferase from Corynebacterium glutamicum (strain ATCC 13032 / DSM 20300 / JCM 1318 / BCRC 11384 / CCUG 27702 / LMG 3730 / NBRC 12168 / NCIMB 10025 / NRRL B-2784 / 534).